A 626-amino-acid polypeptide reads, in one-letter code: Polygalacturonase 1 beta-like protein 3 (626 aa).

An N-terminal signal peptide occupies residues methionine 1–glycine 23. An FXXY 1 repeat occupies phenylalanine 117–tyrosine 120. Residue asparagine 124 is glycosylated (N-linked (GlcNAc...) asparagine). 11 FXXY repeats span residues phenylalanine 125–tyrosine 128, phenylalanine 139–tyrosine 142, phenylalanine 153–tyrosine 156, phenylalanine 167–tyrosine 170, phenylalanine 181–tyrosine 184, phenylalanine 195–tyrosine 198, phenylalanine 209–tyrosine 212, phenylalanine 223–tyrosine 226, phenylalanine 238–tyrosine 241, phenylalanine 252–tyrosine 255, and phenylalanine 266–tyrosine 269. An N-linked (GlcNAc...) asparagine glycan is attached at asparagine 141. An N-linked (GlcNAc...) asparagine glycan is attached at asparagine 277. FXXY repeat units follow at residues phenylalanine 280 to tyrosine 283, phenylalanine 294 to tyrosine 297, phenylalanine 308 to tyrosine 311, phenylalanine 322 to tyrosine 325, phenylalanine 336 to tyrosine 339, phenylalanine 350 to tyrosine 353, and phenylalanine 364 to tyrosine 367. A glycan (N-linked (GlcNAc...) asparagine) is linked at asparagine 370. 2 FXXY repeats span residues phenylalanine 373–tyrosine 376 and phenylalanine 383–tyrosine 386. Asparagine 387 and asparagine 465 each carry an N-linked (GlcNAc...) asparagine glycan. Positions phenylalanine 411 to alanine 625 constitute a BURP domain.

As to expression, expressed in flowers and stems. Detected in trichomes, guard cells, root vascular tissue, root hairs, pollen sacs, sepals and styles of pistils.

Its subcellular location is the secreted. The protein localises to the extracellular space. The protein resides in the apoplast. It localises to the cell wall. Functionally, involved in cell size determination. May serve as a chaperone for expansins through the secretory pathway. The protein is Polygalacturonase 1 beta-like protein 3 of Arabidopsis thaliana (Mouse-ear cress).